Here is a 550-residue protein sequence, read N- to C-terminus: Solute carrier family 22 member 6 (550 aa).

The Cytoplasmic portion of the chain corresponds to 1–9; sequence MAFNDLLQQ. A helical membrane pass occupies residues 10-30; sequence VGGVGRFQQIQVTLVVLPLLL. At 31–135 the chain is on the extracellular side; the sequence is MASHNTLQNF…LVCSHRALRQ (105 aa). 3 N-linked (GlcNAc...) asparagine glycosylation sites follow: Asn39, Asn92, and Asn113. A helical membrane pass occupies residues 136–156; the sequence is LAQSLYMVGVLLGAMVFGYLA. At 157 to 164 the chain is on the cytoplasmic side; sequence DRLGRRKV. The chain crosses the membrane as a helical span at residues 165-187; that stretch reads LILNYLQTAVSGTCTAFAPNFSI. Residues 188-195 are Extracellular-facing; sequence YCAFRLLS. A helical membrane pass occupies residues 196–216; the sequence is GMSLAGISLNCMTLNVEWMPI. The Cytoplasmic portion of the chain corresponds to 217–224; it reads HTRACVGT. A helical membrane pass occupies residues 225-245; that stretch reads LIGYVYSLGQFLLAGVAYAVP. Over 246–248 the chain is Extracellular; that stretch reads HWR. Residues 249-269 traverse the membrane as a helical segment; that stretch reads HLQLLVSAPFFAFFIYSWFFI. Residues 270–337 are Cytoplasmic-facing; sequence ESARWHSSSG…ELLRCPTLRH (68 aa). A helical membrane pass occupies residues 338–358; that stretch reads LFLCLSMLWFATSFAYYGLVM. Residues 359 to 368 lie on the Extracellular side of the membrane; the sequence is DLQGFGVSIY. Residues 369–389 traverse the membrane as a helical segment; that stretch reads LIQVIFGAVDLPAKLVGFLVI. The Cytoplasmic portion of the chain corresponds to 390-395; sequence NSLGRR. Residues 396-416 traverse the membrane as a helical segment; sequence PAQMAALLLAGICILLNGVIP. At 417 to 420 the chain is on the extracellular side; the sequence is QDQS. A helical membrane pass occupies residues 421–444; that stretch reads IVRTSLAVPGKGCLAASFNCIFLY. The Cytoplasmic segment spans residues 445-455; that stretch reads TGELYPTMIRQ. The helical transmembrane segment at 456 to 475 threads the bilayer; it reads TGMGMGSTMARVGSIVSPLV. Residues 476 to 484 lie on the Extracellular side of the membrane; the sequence is SMTAELYPS. Residues 485–505 form a helical membrane-spanning segment; the sequence is MPLFIYGAVPVAASAVTVLLP. Topologically, residues 506–550 are cytoplasmic; that stretch reads ETLGQPLPDTVQDLESRKGKQTRQQQEHQKYMVPLQASAQEKNGL. Residues 514–550 are disordered; it reads DTVQDLESRKGKQTRQQQEHQKYMVPLQASAQEKNGL.

This sequence belongs to the major facilitator (TC 2.A.1) superfamily. Organic cation transporter (TC 2.A.1.19) family. Post-translationally, glycosylated. Glycosylation is necessary for proper targeting of the transporter to the plasma membrane.

The protein localises to the cell membrane. The enzyme catalyses prostaglandin F2alpha(out) = prostaglandin F2alpha(in). It carries out the reaction prostaglandin E2(out) = prostaglandin E2(in). Its function is as follows. Involved in the renal elimination of endogenous and exogenous organic anions. Functions as organic anion exchanger when the uptake of one molecule of organic anion is coupled with an efflux of one molecule of endogenous dicarboxylic acid (glutarate, ketoglutarate, etc). Mediates the transport of prostaglandin E2 (PGE2) and prostaglandin F2-alpha (PGF2-alpha) and may be involved in their renal excretion. Also mediates the sodium-independent uptake of p-aminohippurate (PAH), 2,3-dimercapto-1-propanesulfonic acid (DMPS), cidofovir, adefovir, 9-(2-phosphonylmethoxyethyl) guanine (PMEG), 9-(2-phosphonylmethoxyethyl) diaminopurine (PMEDAP), ochratoxin (OTA), acyclovir (ACV), 3'-azido-3-'deoxythymidine (AZT), cimetidine (CMD), 2,4-dichloro-phenoxyacetate (2,4-D), hippurate (HA), indoleacetate (IA), indoxyl sulfate (IS) and 3-carboxy-4-methyl-5-propyl-2-furanpropionate (CMPF) and edaravone sulfate. PAH uptake is inhibited by p-chloromercuribenzenesulphonate (PCMBS), diethyl pyrocarbonate (DEPC), indomethacin, sulindac, diclofenac, carprofen, okadaic acid, benzothiazolylcysteine (BTC), S-chlorotrifluoroethylcysteine (CTFC), cysteine S-conjugates S-dichlorovinylcysteine (DCVC), furosemide, steviol, phorbol 12-myristate 13-acetate (PMA), calcium ionophore A23187, benzylpenicillin, bumetamide, losartan, probenecid, phenol red, urate, glutarate and alpha-ketoglutarate. The chain is Solute carrier family 22 member 6 (SLC22A6) from Pongo abelii (Sumatran orangutan).